The following is a 708-amino-acid chain: MDSSHNDSSSDEEGIDSNNRRHHSNHQVQRLEAFFHECPHPDDSQRRQLGNELNLKHKQIKFWFQNRRTQARIHNEKADNIALRVENMKIRCVNEAMEKALETVLCPPCGGPHGKEEQLCNLQKLRTKNVILKTEYERLSSYLTKHGGYSIPSVDALPDLHGPSTYGSTSNNRPASYGSSSNHLPQQSSLLRRPFTRELINTTPLPKPVLLQHFQQLSQLEKNRMFEIAKNAVAEVMSLIQMEHSMWIKSTIDGRAIIDPGNYKRYFTKNSHLKSRSALQSHHESSMEVVVVQMDARNLVDMFLNTEKWARLFPTIVTEAKTIHVLDSMDHPRQTFSRVVYEQLHILSPLVLPREFIILRTCQQMKEDLWLIADVSCYLQNVEFESTAPICTKRPSGVLIQALPHGRSKVTWIEHVEVTDKVWPHQLYRDLLYGGFGYGARRWTATLQRMCERLSLYSMTDFPPTDYPGVVKTIEGRRSVMSLGERMLKNFAWIMKMSDKLDLPQQSGANNSGVRISVRTNTEAGQPPGLIVCAGSSLSLPLPPLQVYDFLRNLEVRHQWDVHCQGNPVTEAARFVTGPDQKNNVTFLQPSSVGEYKLMILQDGFIDALGGMVVYAPMNLNTAYSAISGQVDPSTIPILPSGFIISRDSHPSSSEVDGGSMTLLTLAFQIFVTGPSYYTDLNLKDSATTVNTLVSSAVQRIKAMLNCE.

The segment at 1–24 (MDSSHNDSSSDEEGIDSNNRRHHS) is disordered. Positions 16–75 (DSNNRRHHSNHQVQRLEAFFHECPHPDDSQRRQLGNELNLKHKQIKFWFQNRRTQARIHN) form a DNA-binding region, homeobox. Residues 119 to 141 (LCNLQKLRTKNVILKTEYERLSS) adopt a coiled-coil conformation. The segment at 162-188 (GPSTYGSTSNNRPASYGSSSNHLPQQS) is disordered. Residues 165 to 188 (TYGSTSNNRPASYGSSSNHLPQQS) show a composition bias toward polar residues. The 239-residue stretch at 218-456 (SQLEKNRMFE…LQRMCERLSL (239 aa)) folds into the START domain.

Belongs to the HD-ZIP homeobox family. Class IV subfamily. As to quaternary structure, interacts with ANT, BBM and AIL1. In terms of tissue distribution, expressed in exclusively in anthers with highest levels in the tapetum and pollen grains.

The protein localises to the nucleus. Functionally, probable transcription factor. This Arabidopsis thaliana (Mouse-ear cress) protein is Homeobox-leucine zipper protein HDG10.